Here is a 293-residue protein sequence, read N- to C-terminus: Elongation factor Ts (293 aa).

Positions T81 to V84 are involved in Mg(2+) ion dislocation from EF-Tu.

Belongs to the EF-Ts family.

It localises to the cytoplasm. Its function is as follows. Associates with the EF-Tu.GDP complex and induces the exchange of GDP to GTP. It remains bound to the aminoacyl-tRNA.EF-Tu.GTP complex up to the GTP hydrolysis stage on the ribosome. In Thioalkalivibrio sulfidiphilus (strain HL-EbGR7), this protein is Elongation factor Ts.